A 512-amino-acid chain; its full sequence is MSKKPVMLMILDGFGISPNKEGNAVAAANKPNYDRLFNKYPHTELQASGLEVGLPEGQMGNSEVGHLNIGAGRIIYQELTRITKEIKEGTFFTNKALVKAMDEAKENNTSLHLMGLLSNGGVHSHIDHLKGLLELAKKKGLQKVYVHAFMDGRDVAPSSGKDFIVELENAMKEIGVGEIATISGRYYAMDRDNRWERVELAYNAMALGEGEKASSAVEAIEKSYHDNKTDEFVLPTVIEEDGHPVARIKDGDSVIFFNFRPDRAREITRAIVDPEFKGFERKQLHVNFVCMTQYDKTLECVDVAYRPESYTNTLGEYVASKGLNQLRIAETEKYAHVTFFFNGGVEQPNTNEDRALIASPKVATYDLKPEMSAYEVTDELINRLDQDKYDMIILNFANPDMVGHTGVQEAAVKAIEAVDECLGKVADKVLEKEGTLFITADHGNAEVMIDYSTGKPMTAHTSDPVPFLWVSKDAEGKSLKDGGKLADIAPTMLTVMGLEVPSEMTGTCLLNK.

Mn(2+)-binding residues include D12 and S62. Catalysis depends on S62, which acts as the Phosphoserine intermediate. Residues H123, 153–154 (RD), R185, R191, 260–263 (RPDR), and K333 each bind substrate. Mn(2+) is bound by residues D400, H404, D441, H442, and H460.

This sequence belongs to the BPG-independent phosphoglycerate mutase family. In terms of assembly, monomer. Mn(2+) serves as cofactor.

The catalysed reaction is (2R)-2-phosphoglycerate = (2R)-3-phosphoglycerate. It participates in carbohydrate degradation; glycolysis; pyruvate from D-glyceraldehyde 3-phosphate: step 3/5. Its function is as follows. Catalyzes the interconversion of 2-phosphoglycerate and 3-phosphoglycerate. The chain is 2,3-bisphosphoglycerate-independent phosphoglycerate mutase from Clostridium perfringens (strain 13 / Type A).